We begin with the raw amino-acid sequence, 554 residues long: Glutamine--tRNA ligase (554 aa).

Positions 34–44 (PEPNGYLHIGH) match the 'HIGH' region motif. ATP is bound by residues 35-37 (EPN) and 41-47 (HIGHAKS). Asp67 and Tyr212 together coordinate L-glutamine. Residues Thr231, 261 to 262 (RL), and 269 to 271 (MSK) each bind ATP. The short motif at 268–272 (VMSKR) is the 'KMSKS' region element. The segment at 317–324 (TKQDNTIE) is interaction with tRNA.

The protein belongs to the class-I aminoacyl-tRNA synthetase family. Monomer.

The protein resides in the cytoplasm. It catalyses the reaction tRNA(Gln) + L-glutamine + ATP = L-glutaminyl-tRNA(Gln) + AMP + diphosphate. The sequence is that of Glutamine--tRNA ligase from Shigella flexneri serotype 5b (strain 8401).